A 148-amino-acid chain; its full sequence is FAD synthase (148 aa).

Residues 14 to 15 (VF), 19 to 22 (HVGH), and Asp100 each bind ATP.

The protein belongs to the archaeal FAD synthase family. In terms of assembly, homodimer. It depends on a divalent metal cation as a cofactor.

It catalyses the reaction FMN + ATP + H(+) = FAD + diphosphate. The protein operates within cofactor biosynthesis; FAD biosynthesis; FAD from FMN: step 1/1. Its function is as follows. Catalyzes the transfer of the AMP portion of ATP to flavin mononucleotide (FMN) to produce flavin adenine dinucleotide (FAD) coenzyme. The protein is FAD synthase of Thermococcus sibiricus (strain DSM 12597 / MM 739).